A 175-amino-acid chain; its full sequence is Ribosome maturation factor RimM (175 aa).

Positions 96–172 (PDTYYDHQLE…LIEIDPPDGL (77 aa)) constitute a PRC barrel domain.

The protein belongs to the RimM family. In terms of assembly, binds ribosomal protein uS19.

It is found in the cytoplasm. An accessory protein needed during the final step in the assembly of 30S ribosomal subunit, possibly for assembly of the head region. Essential for efficient processing of 16S rRNA. May be needed both before and after RbfA during the maturation of 16S rRNA. It has affinity for free ribosomal 30S subunits but not for 70S ribosomes. The polypeptide is Ribosome maturation factor RimM (Mycolicibacterium paratuberculosis (strain ATCC BAA-968 / K-10) (Mycobacterium paratuberculosis)).